Consider the following 404-residue polypeptide: Argininosuccinate synthase (404 aa).

ATP is bound at residue 9-17 (AYSGGLDTS). Y86 serves as a coordination point for L-citrulline. Residue G116 participates in ATP binding. L-aspartate contacts are provided by T118, N122, and D123. N122 lines the L-citrulline pocket. L-citrulline-binding residues include R126, S174, S183, E259, and Y271.

Belongs to the argininosuccinate synthase family. Type 1 subfamily. In terms of assembly, homotetramer.

The protein localises to the cytoplasm. It carries out the reaction L-citrulline + L-aspartate + ATP = 2-(N(omega)-L-arginino)succinate + AMP + diphosphate + H(+). The protein operates within amino-acid biosynthesis; L-arginine biosynthesis; L-arginine from L-ornithine and carbamoyl phosphate: step 2/3. The polypeptide is Argininosuccinate synthase (Listeria monocytogenes serotype 4b (strain CLIP80459)).